The chain runs to 584 residues: BEL1-like homeodomain protein 8 (584 aa).

Residues 266–282 (SRFLEPAQKMLEEFCIS) form an SR/KY domain region. The segment at 292-317 (ESTSMEDDDDDDDNLSGFSSSSEPLE) is disordered. Over residues 295–305 (SMEDDDDDDDN) the composition is skewed to acidic residues. The tract at residues 316–387 (LEPKNRLKKA…ALRTAIAEHV (72 aa)) is BELL domain. Residues 424–486 (IWRPQRGLPE…NARVRLWKPM (63 aa)) constitute a DNA-binding region (homeobox). Residues 503–529 (TSHNIEPSNRPNTVSSPSHEQTLTGLS) are disordered.

Belongs to the TALE/BELL homeobox family. As to quaternary structure, may form heterodimeric complex with the TALE/KNOX proteins STM and KNAT1/BP.

The protein localises to the nucleus. Required for specifying floral primordia and establishing early internode patterning events during inflorescence development. The sequence is that of BEL1-like homeodomain protein 8 (BLH8) from Arabidopsis thaliana (Mouse-ear cress).